We begin with the raw amino-acid sequence, 201 residues long: Small ribosomal subunit protein uS4c (201 aa).

Residues 15–44 are disordered; sequence LGALPGLTNKRPRAGSDLRNQSRSGKKSQY. The S4 RNA-binding domain maps to 89-150; that stretch reads MRLDNILFRL…EQKSKVLIQN (62 aa).

Belongs to the universal ribosomal protein uS4 family. Part of the 30S ribosomal subunit. Contacts protein S5. The interaction surface between S4 and S5 is involved in control of translational fidelity.

It is found in the plastid. Its subcellular location is the chloroplast. Its function is as follows. One of the primary rRNA binding proteins, it binds directly to 16S rRNA where it nucleates assembly of the body of the 30S subunit. Functionally, with S5 and S12 plays an important role in translational accuracy. The protein is Small ribosomal subunit protein uS4c (rps4) of Lactuca sativa (Garden lettuce).